The chain runs to 142 residues: Large ribosomal subunit protein uL13 (142 aa).

The protein belongs to the universal ribosomal protein uL13 family. In terms of assembly, part of the 50S ribosomal subunit.

Its function is as follows. This protein is one of the early assembly proteins of the 50S ribosomal subunit, although it is not seen to bind rRNA by itself. It is important during the early stages of 50S assembly. In Saccharophagus degradans (strain 2-40 / ATCC 43961 / DSM 17024), this protein is Large ribosomal subunit protein uL13.